The following is a 517-amino-acid chain: C-22 sterol desaturase ERG5 (517 aa).

Residues 21 to 41 traverse the membrane as a helical segment; it reads LAVAKATGSPITTLFTIIFLI. Cys-458 contacts heme.

This sequence belongs to the cytochrome P450 family. Requires heme as cofactor.

It localises to the endoplasmic reticulum membrane. It carries out the reaction 5-dehydroepisterol + NADPH + O2 + H(+) = ergosta-5,7,22,24(28)-tetraen-3beta-ol + NADP(+) + 2 H2O. Its pathway is steroid metabolism; ergosterol biosynthesis; ergosterol from zymosterol: step 4/5. C-22 sterol desaturase; part of the third module of ergosterol biosynthesis pathway that includes the late steps of the pathway. ERG5 converts 5-dehydroepisterol into ergosta-5,7,22,24(28)-tetraen-3beta-ol by forming the C-22(23) double bond in the sterol side chain. The third module or late pathway involves the ergosterol synthesis itself through consecutive reactions that mainly occur in the endoplasmic reticulum (ER) membrane. Firstly, the squalene synthase ERG9 catalyzes the condensation of 2 farnesyl pyrophosphate moieties to form squalene, which is the precursor of all steroids. Squalene synthase is crucial for balancing the incorporation of farnesyl diphosphate (FPP) into sterol and nonsterol isoprene synthesis. Secondly, the squalene epoxidase ERG1 catalyzes the stereospecific oxidation of squalene to (S)-2,3-epoxysqualene, which is considered to be a rate-limiting enzyme in steroid biosynthesis. Then, the lanosterol synthase ERG7 catalyzes the cyclization of (S)-2,3 oxidosqualene to lanosterol, a reaction that forms the sterol core. In the next steps, lanosterol is transformed to zymosterol through a complex process involving various demethylation, reduction and desaturation reactions. The lanosterol 14-alpha-demethylase ERG11 (also known as CYP51) catalyzes C14-demethylation of lanosterol to produce 4,4'-dimethyl cholesta-8,14,24-triene-3-beta-ol, which is critical for ergosterol biosynthesis. The C-14 reductase ERG24 reduces the C14=C15 double bond of 4,4-dimethyl-cholesta-8,14,24-trienol to produce 4,4-dimethyl-cholesta-8,24-dienol. 4,4-dimethyl-cholesta-8,24-dienol is substrate of the C-4 demethylation complex ERG25-ERG26-ERG27 in which ERG25 catalyzes the three-step monooxygenation required for the demethylation of 4,4-dimethyl and 4alpha-methylsterols, ERG26 catalyzes the oxidative decarboxylation that results in a reduction of the 3-beta-hydroxy group at the C-3 carbon to an oxo group, and ERG27 is responsible for the reduction of the keto group on the C-3. ERG28 has a role as a scaffold to help anchor ERG25, ERG26 and ERG27 to the endoplasmic reticulum and ERG29 regulates the activity of the iron-containing C4-methylsterol oxidase ERG25. Then, the sterol 24-C-methyltransferase ERG6 catalyzes the methyl transfer from S-adenosyl-methionine to the C-24 of zymosterol to form fecosterol. The C-8 sterol isomerase ERG2 catalyzes the reaction which results in unsaturation at C-7 in the B ring of sterols and thus converts fecosterol to episterol. The sterol-C5-desaturase ERG3 then catalyzes the introduction of a C-5 double bond in the B ring to produce 5-dehydroepisterol. The C-22 sterol desaturase ERG5 further converts 5-dehydroepisterol into ergosta-5,7,22,24(28)-tetraen-3beta-ol by forming the C-22(23) double bond in the sterol side chain. Finally, ergosta-5,7,22,24(28)-tetraen-3beta-ol is substrate of the C-24(28) sterol reductase ERG4 to produce ergosterol. This chain is C-22 sterol desaturase ERG5, found in Candida albicans (strain SC5314 / ATCC MYA-2876) (Yeast).